A 557-amino-acid polypeptide reads, in one-letter code: Membrane protein insertase YidC (557 aa).

A helical transmembrane segment spans residues 7–27 (ILLVALAVVSYLLVLQWNQDY). Residues 42–77 (ASPALPETVPGDSSTSADVPTAGSGNQVPDSAASTA) are disordered. The span at 52–77 (GDSSTSADVPTAGSGNQVPDSAASTA) shows a compositional bias: polar residues. A run of 3 helical transmembrane segments spans residues 370-390 (WGWS…PLSA), 436-456 (LGGC…YWVL), and 514-534 (PIIF…YWVV).

This sequence belongs to the OXA1/ALB3/YidC family. Type 1 subfamily. In terms of assembly, interacts with the Sec translocase complex via SecD. Specifically interacts with transmembrane segments of nascent integral membrane proteins during membrane integration.

The protein localises to the cell inner membrane. Its function is as follows. Required for the insertion and/or proper folding and/or complex formation of integral membrane proteins into the membrane. Involved in integration of membrane proteins that insert both dependently and independently of the Sec translocase complex, as well as at least some lipoproteins. Aids folding of multispanning membrane proteins. The sequence is that of Membrane protein insertase YidC from Azotobacter vinelandii (strain DJ / ATCC BAA-1303).